Reading from the N-terminus, the 332-residue chain is Endo-1,4-beta-xylanase B (332 aa).

One can recognise a GH10 domain in the interval 2-331 (STEIPSLSAS…KDSFWRIIGQ (330 aa)). The active-site Proton donor is the E134. E241 functions as the Nucleophile in the catalytic mechanism.

Belongs to the glycosyl hydrolase 10 (cellulase F) family. Cytoplasmic xylanase subfamily.

Its subcellular location is the cytoplasm. It catalyses the reaction Endohydrolysis of (1-&gt;4)-beta-D-xylosidic linkages in xylans.. The protein operates within glycan degradation; xylan degradation. Completely inhibited by Ag(2+), Cu(2+), Hg(2+), Mn(2+), Pb(2+) and Sn(2+). Strongly inhibited by Fe(2+) and Zn(2+). Co(2+) and Ni(2+) cause little inhibition while Ca(2+) and Mg(2+) do not affect enzyme activity, and Ba(2+) produces a small stimulating effect. Irreversibly inactivated by SDS in vitro. Its function is as follows. Plays a role in plant xylan biodegradation, probably via the hydrolysis of short xylooligosaccharides resulting from extracellular xylan hydrolysis, once they have been transported inside cells. Shows similar activity on xylans of different rate of arabinose or methylglucuronic substitution. Also displays high activity on aryl-xylosides. Is active on xylotetraose and xylotriose, but does not hydrolyze xylobiose, indicating that XynB is a xylanase and not a beta-xylosidase. The chain is Endo-1,4-beta-xylanase B (xynB) from Paenibacillus barcinonensis.